A 368-amino-acid chain; its full sequence is Flagellar P-ring protein (368 aa).

The signal sequence occupies residues 1 to 22 (MLIPLARAVLALALLGAGAAHA).

The protein belongs to the FlgI family. In terms of assembly, the basal body constitutes a major portion of the flagellar organelle and consists of four rings (L,P,S, and M) mounted on a central rod.

Its subcellular location is the periplasm. It localises to the bacterial flagellum basal body. Functionally, assembles around the rod to form the L-ring and probably protects the motor/basal body from shearing forces during rotation. This Bordetella bronchiseptica (strain ATCC BAA-588 / NCTC 13252 / RB50) (Alcaligenes bronchisepticus) protein is Flagellar P-ring protein.